The following is a 239-amino-acid chain: Mannose-P-dolichol utilization defect 1 protein homolog 1 (239 aa).

A run of 6 helical transmembrane segments spans residues 25 to 45, 62 to 82, 91 to 111, 123 to 143, 174 to 194, and 202 to 222; these read CLLP…SMTV, LSVV…AYCL, FGEL…IYYF, AILY…PFLF, LSFL…FTSI, and MLLG…QILL. Positions 27–93 constitute a PQ-loop 1 domain; the sequence is LPLISKLLGY…KDLPFSAFGE (67 aa). The 56-residue stretch at 150 to 205 folds into the PQ-loop 2 domain; sequence KHLIFLSARIPQIWKNFRNKSTGQLSFLTCLMNFGGALARVFTSIQEKAPLSMLLG.

Belongs to the MPDU1 (TC 2.A.43.3) family.

The protein resides in the membrane. The sequence is that of Mannose-P-dolichol utilization defect 1 protein homolog 1 from Arabidopsis thaliana (Mouse-ear cress).